The primary structure comprises 689 residues: Glycine--tRNA ligase beta subunit (689 aa).

The protein belongs to the class-II aminoacyl-tRNA synthetase family. Tetramer of two alpha and two beta subunits.

The protein resides in the cytoplasm. The enzyme catalyses tRNA(Gly) + glycine + ATP = glycyl-tRNA(Gly) + AMP + diphosphate. The sequence is that of Glycine--tRNA ligase beta subunit from Shigella flexneri serotype 5b (strain 8401).